A 251-amino-acid polypeptide reads, in one-letter code: PF03932 family protein CutC (251 aa).

This sequence belongs to the CutC family.

The protein localises to the cytoplasm. The sequence is that of PF03932 family protein CutC from Edwardsiella ictaluri (strain 93-146).